Reading from the N-terminus, the 118-residue chain is MKNKYIEQFEAKQIEGKNVPDFRAGDTLKLAIRIKEGDKTRIQNFEGICIARRGNGVSETFIVRKIGANNVGVERIFPIYSESLESITVLRRGRVRRARLFYLRDRRGKAARIKELKK.

This sequence belongs to the bacterial ribosomal protein bL19 family.

Functionally, this protein is located at the 30S-50S ribosomal subunit interface and may play a role in the structure and function of the aminoacyl-tRNA binding site. This is Large ribosomal subunit protein bL19 from Campylobacter jejuni subsp. jejuni serotype O:2 (strain ATCC 700819 / NCTC 11168).